We begin with the raw amino-acid sequence, 363 residues long: Translocating chain-associated membrane protein 1-like 1 (363 aa).

At 1-29 the chain is on the cytoplasmic side; it reads MGLRKKNARNPPVLSHEFMVQNHADMVSC. Residues 30 to 50 traverse the membrane as a helical segment; that stretch reads VGMFFVLGLMFEGTSEMSIAF. The Lumenal portion of the chain corresponds to 51-80; the sequence is LTLQHGVVVPAEGLPSGSRTLYHYGVKDLA. A helical transmembrane segment spans residues 81–101; the sequence is TVFFYMLVAIIIHATIQEYVL. Residues 102–120 lie on the Cytoplasmic side of the membrane; it reads DKLSRRLQLTKGKQNKLNE. A TLC domain is found at 116–324; the sequence is NKLNEAGQLS…TVWLQRWLED (209 aa). The chain crosses the membrane as a helical span at residues 121–141; that stretch reads AGQLSVFYIVSGIWGMIILAS. Residues 142–159 lie on the Lumenal side of the membrane; it reads ENCLSDPTLLWKSQPHNM. A helical transmembrane segment spans residues 160-179; that stretch reads MTFQMKFFYISQLAYWFHSF. At 180 to 191 the chain is on the cytoplasmic side; the sequence is PELYFQKVRKQD. A helical membrane pass occupies residues 192–214; sequence IPGQLIYIGLHLFHIGGAYLLYL. Residues 215-218 are Lumenal-facing; it reads NHLG. The chain crosses the membrane as a helical span at residues 219–241; the sequence is LLLLMLHYAVELLSSVCSLLYFG. The Cytoplasmic portion of the chain corresponds to 242 to 250; that stretch reads DERYQKGLS. Residues 251-271 form a helical membrane-spanning segment; the sequence is LWPIVFISGRLVTLIVSVVTV. Topologically, residues 272-295 are lumenal; that stretch reads GLHLAGTNRNGNALSGNVNVLAAK. The chain crosses the membrane as a helical span at residues 296–316; it reads IAVLSSSCSIQVYITWTLTTV. Topologically, residues 317–363 are cytoplasmic; sequence WLQRWLEDANLHVCGRKRRSRARKGTENGVENPNRIDSPPKKKEKAP. Positions 338–363 are disordered; the sequence is ARKGTENGVENPNRIDSPPKKKEKAP. Over residues 354–363 the composition is skewed to basic and acidic residues; the sequence is SPPKKKEKAP.

The protein belongs to the TRAM family.

The protein localises to the endoplasmic reticulum membrane. Stimulatory or required for the translocation of secretory proteins across the ER membrane. The protein is Translocating chain-associated membrane protein 1-like 1 (Tram1l1) of Mus musculus (Mouse).